Consider the following 240-residue polypeptide: Ubiquinone biosynthesis O-methyltransferase (240 aa).

4 residues coordinate S-adenosyl-L-methionine: arginine 44, glycine 64, aspartate 85, and methionine 129.

Belongs to the methyltransferase superfamily. UbiG/COQ3 family.

The catalysed reaction is a 3-demethylubiquinol + S-adenosyl-L-methionine = a ubiquinol + S-adenosyl-L-homocysteine + H(+). It carries out the reaction a 3-(all-trans-polyprenyl)benzene-1,2-diol + S-adenosyl-L-methionine = a 2-methoxy-6-(all-trans-polyprenyl)phenol + S-adenosyl-L-homocysteine + H(+). It participates in cofactor biosynthesis; ubiquinone biosynthesis. Its function is as follows. O-methyltransferase that catalyzes the 2 O-methylation steps in the ubiquinone biosynthetic pathway. In Escherichia fergusonii (strain ATCC 35469 / DSM 13698 / CCUG 18766 / IAM 14443 / JCM 21226 / LMG 7866 / NBRC 102419 / NCTC 12128 / CDC 0568-73), this protein is Ubiquinone biosynthesis O-methyltransferase.